Consider the following 211-residue polypeptide: FMN-dependent NADH:quinone oxidoreductase (211 aa).

Residues serine 10 and 16 to 18 (SVS) contribute to the FMN site.

Belongs to the azoreductase type 1 family. In terms of assembly, homodimer. The cofactor is FMN.

It carries out the reaction 2 a quinone + NADH + H(+) = 2 a 1,4-benzosemiquinone + NAD(+). The enzyme catalyses N,N-dimethyl-1,4-phenylenediamine + anthranilate + 2 NAD(+) = 2-(4-dimethylaminophenyl)diazenylbenzoate + 2 NADH + 2 H(+). In terms of biological role, quinone reductase that provides resistance to thiol-specific stress caused by electrophilic quinones. Also exhibits azoreductase activity. Catalyzes the reductive cleavage of the azo bond in aromatic azo compounds to the corresponding amines. This Parafrankia sp. (strain EAN1pec) protein is FMN-dependent NADH:quinone oxidoreductase.